The primary structure comprises 342 residues: Cytochrome c oxidase subunit 2 (342 aa).

A signal peptide spans Met1–Gly22. Cys23 carries the N-palmitoyl cysteine lipid modification. Cys23 carries the S-diacylglycerol cysteine lipid modification. The Extracellular segment spans residues Cys23–Ile50. Residues Cys23 to Glu249 are cytochrome c oxidase subunit II. Residues Ile51–Ala69 form a helical membrane-spanning segment. Residues Lys70–Ala89 lie on the Cytoplasmic side of the membrane. The helical transmembrane segment at Leu90–Pro108 threads the bilayer. The Extracellular portion of the chain corresponds to Thr109 to Glu342. Residues His175, Cys210, Cys214, and His218 each contribute to the Cu cation site. The region spanning Thr250–Glu342 is the Cytochrome c domain. Heme c is bound by residues Cys264, Cys267, His268, and Met317.

It belongs to the cytochrome c oxidase subunit 2 family. It depends on Cu cation as a cofactor. The cofactor is heme c.

It is found in the cell membrane. It carries out the reaction 4 Fe(II)-[cytochrome c] + O2 + 8 H(+)(in) = 4 Fe(III)-[cytochrome c] + 2 H2O + 4 H(+)(out). Its function is as follows. Subunits I and II form the functional core of the enzyme complex. Electrons originating in cytochrome c are transferred via heme a and Cu(A) to the binuclear center formed by heme a3 and Cu(B). This is Cytochrome c oxidase subunit 2 (ctaC) from Alkalihalophilus pseudofirmus (strain ATCC BAA-2126 / JCM 17055 / OF4) (Bacillus pseudofirmus).